Reading from the N-terminus, the 265-residue chain is Glutamate racemase (265 aa).

Residues 9–10 (DS) and 41–42 (YG) each bind substrate. Catalysis depends on Cys73, which acts as the Proton donor/acceptor. 74–75 (NT) is a binding site for substrate. Cys180 serves as the catalytic Proton donor/acceptor. 181–182 (TH) lines the substrate pocket.

The protein belongs to the aspartate/glutamate racemases family.

The enzyme catalyses L-glutamate = D-glutamate. It participates in cell wall biogenesis; peptidoglycan biosynthesis. Provides the (R)-glutamate required for cell wall biosynthesis. The protein is Glutamate racemase of Aliivibrio salmonicida (strain LFI1238) (Vibrio salmonicida (strain LFI1238)).